Consider the following 83-residue polypeptide: U5-theraphotoxin-Hs1a 4 (83 aa).

Positions 1–21 (MKTSMFLTLTGLVLLFVDCYA) are cleaved as a signal peptide. Positions 22 to 49 (SESEEKEFPKELLSSIFAADSDFKVEER) are excised as a propeptide. 3 disulfides stabilise this stretch: cysteine 51/cysteine 63, cysteine 56/cysteine 68, and cysteine 62/cysteine 75.

The protein belongs to the neurotoxin 10 (Hwtx-1) family. 51 (Hntx-8) subfamily. Hntx-8 sub-subfamily. In terms of tissue distribution, expressed by the venom gland.

Its subcellular location is the secreted. In terms of biological role, agglutinates erythrocytes. The protein is U5-theraphotoxin-Hs1a 4 of Cyriopagopus schmidti (Chinese bird spider).